The chain runs to 236 residues: Class B acid phosphatase (236 aa).

The signal sequence occupies residues 1-23; the sequence is MRKLTLTLSALALALSLNSVADA. Aspartate 68 functions as the Nucleophile in the catalytic mechanism. Mg(2+) is bound by residues aspartate 68 and aspartate 70. Residue aspartate 70 is the Proton donor of the active site. Residues 136–137 and lysine 176 contribute to the substrate site; that span reads TG. Aspartate 191 lines the Mg(2+) pocket.

Belongs to the class B bacterial acid phosphatase family. In terms of assembly, homotetramer. Requires Mg(2+) as cofactor.

The protein resides in the periplasm. It carries out the reaction a phosphate monoester + H2O = an alcohol + phosphate. With respect to regulation, activated by ethanol. Also activated by Co(2+), Zn(2+) and glycerol. Inhibited by EDTA, inorganic phosphate, nucleosides and Ca(2+). Unaffected by fluoride and tartrate. In terms of biological role, dephosphorylates several organic phosphate monoesters including 5'-AMP, 3'-AMP, pNPP, PDP, 5'-UMP, 3'-UMP, G2P, glucose 6-P and ribose 5-P. No activity toward organic phosphate diesters. Also has a phosphotransferase activity catalyzing the transfer of low-energy phosphate groups from organic phosphate monoesters to free hydroxyl groups of various organic compounds. The protein is Class B acid phosphatase (aphA) of Morganella morganii (Proteus morganii).